The primary structure comprises 421 residues: UDP-N-acetylglucosamine 1-carboxyvinyltransferase (421 aa).

A phosphoenolpyruvate-binding site is contributed by 22–23 (KN). Arg-93 lines the UDP-N-acetyl-alpha-D-glucosamine pocket. Cys-117 functions as the Proton donor in the catalytic mechanism. Cys-117 carries the post-translational modification 2-(S-cysteinyl)pyruvic acid O-phosphothioketal. Residues 122 to 126 (RPVDL), Asp-308, and Val-330 each bind UDP-N-acetyl-alpha-D-glucosamine.

This sequence belongs to the EPSP synthase family. MurA subfamily.

It is found in the cytoplasm. The enzyme catalyses phosphoenolpyruvate + UDP-N-acetyl-alpha-D-glucosamine = UDP-N-acetyl-3-O-(1-carboxyvinyl)-alpha-D-glucosamine + phosphate. It functions in the pathway cell wall biogenesis; peptidoglycan biosynthesis. Its function is as follows. Cell wall formation. Adds enolpyruvyl to UDP-N-acetylglucosamine. This Ectopseudomonas mendocina (strain ymp) (Pseudomonas mendocina) protein is UDP-N-acetylglucosamine 1-carboxyvinyltransferase.